We begin with the raw amino-acid sequence, 132 residues long: Mite allergen Der p 5 (132 aa).

2 immunodominant conformational IgE-binding epitope regions span residues 25–53 (DYQN…FYLQ) and 102–132 (EQYN…KIEV).

The protein belongs to the mite group 5 allergen family. As to quaternary structure, monomer. Trimer of homodimers. Oligomerizes in a concentration-dependent manner.

This is Mite allergen Der p 5 (DERP5) from Dermatophagoides pteronyssinus (European house dust mite).